The following is a 1013-amino-acid chain: Putative DNA polymerase 060R (1013 aa).

The protein belongs to the DNA polymerase type-B family.

It carries out the reaction DNA(n) + a 2'-deoxyribonucleoside 5'-triphosphate = DNA(n+1) + diphosphate. In terms of biological role, DNA-directed DNA polymerase involved in viral DNA replication. The chain is Putative DNA polymerase 060R from Dryophytes versicolor (chameleon treefrog).